The primary structure comprises 472 residues: Ribulose bisphosphate carboxylase large chain 1 (472 aa).

Residues asparagine 115 and threonine 165 each contribute to the substrate site. The Proton acceptor role is filled by lysine 167. Substrate is bound at residue lysine 169. 3 residues coordinate Mg(2+): lysine 193, aspartate 195, and glutamate 196. Lysine 193 carries the N6-carboxylysine modification. Histidine 286 (proton acceptor) is an active-site residue. The substrate site is built by arginine 287, histidine 319, and serine 371.

The protein belongs to the RuBisCO large chain family. Type I subfamily. Heterohexadecamer of 8 large chains and 8 small chains. Mg(2+) serves as cofactor.

The catalysed reaction is 2 (2R)-3-phosphoglycerate + 2 H(+) = D-ribulose 1,5-bisphosphate + CO2 + H2O. It carries out the reaction D-ribulose 1,5-bisphosphate + O2 = 2-phosphoglycolate + (2R)-3-phosphoglycerate + 2 H(+). In terms of biological role, ruBisCO catalyzes two reactions: the carboxylation of D-ribulose 1,5-bisphosphate, the primary event in carbon dioxide fixation, as well as the oxidative fragmentation of the pentose substrate. Both reactions occur simultaneously and in competition at the same active site. This chain is Ribulose bisphosphate carboxylase large chain 1, found in Allochromatium vinosum (strain ATCC 17899 / DSM 180 / NBRC 103801 / NCIMB 10441 / D) (Chromatium vinosum).